The sequence spans 400 residues: Large envelope protein (400 aa).

An N-acetylmethionine modification is found at Met1. Disordered regions lie at residues 1 to 20 (MGGW…SVPN) and 85 to 114 (LTPV…PLRD). Gly2 is lipidated: N-myristoyl glycine; by host. The segment at 2–119 (GGWSSKPRKG…PPLRDSHPQA (118 aa)) is pre-S1. The interval 2-174 (GGWSSKPRKG…SARTGDPVTN (173 aa)) is pre-S. Residues 2 to 181 (GGWSSKPRKG…VTNMENITSG (180 aa)) are Virion surface; in external conformation-facing. The Intravirion; in internal conformation portion of the chain corresponds to 2–253 (GGWSSKPRKG…PGYRWMCLRR (252 aa)). The N-linked (GlcNAc...) asparagine glycan is linked to Trp4. The span at 97–106 (ANRQSGRQPT) shows a compositional bias: polar residues. Positions 120–174 (MQWNSTAFHQALQDPRVRGLYFPAGGSSSGTVNPAPNIASHISSISARTGDPVTN) are pre-S2. A helical membrane pass occupies residues 182-202 (FLGPLPVLQAGFFLLTRILTI). Topologically, residues 203 to 253 (PQSLDSWWTSLNFLGGSPVCLGQNSRSPTSNHSPTSCPPICPGYRWMCLRR) are intravirion; in external conformation. The chain crosses the membrane as a helical span at residues 254–274 (FIIFLFILLLCLIFLLVLLDY). Over 275 to 348 (QGMLPVCPLI…WASVRFSWLS (74 aa)) the chain is Virion surface. Asn320 is a glycosylation site (N-linked (GlcNAc...) asparagine; by host). A helical membrane pass occupies residues 349–369 (LLVPFVQWFVGLSPTVWLSAI). Topologically, residues 370 to 375 (WMMWYW) are intravirion. Residues 376-398 (GPSLYSIVSSFIPLLPIFFCLWV) form a helical membrane-spanning segment. The Virion surface portion of the chain corresponds to 399-400 (YI).

Belongs to the orthohepadnavirus major surface antigen family. In terms of assembly, in its internal form (Li-HBsAg), interacts with the capsid protein and with the isoform S. Interacts with host chaperone CANX. As to quaternary structure, associates with host chaperone CANX through its pre-S2 N glycan; this association may be essential for isoform M proper secretion. Interacts with isoform L. Interacts with the antigens of satellite virus HDV (HDVAgs); this interaction is required for encapsidation of HDV genomic RNA. In terms of processing, isoform M is N-terminally acetylated by host at a ratio of 90%, and N-glycosylated by host at the pre-S2 region. Myristoylated.

It is found in the virion membrane. The large envelope protein exists in two topological conformations, one which is termed 'external' or Le-HBsAg and the other 'internal' or Li-HBsAg. In its external conformation the protein attaches the virus to cell receptors and thereby initiating infection. This interaction determines the species specificity and liver tropism. This attachment induces virion internalization predominantly through caveolin-mediated endocytosis. The large envelope protein also assures fusion between virion membrane and endosomal membrane. In its internal conformation the protein plays a role in virion morphogenesis and mediates the contact with the nucleocapsid like a matrix protein. In terms of biological role, the middle envelope protein plays an important role in the budding of the virion. It is involved in the induction of budding in a nucleocapsid independent way. In this process the majority of envelope proteins bud to form subviral lipoprotein particles of 22 nm of diameter that do not contain a nucleocapsid. This Homo sapiens (Human) protein is Large envelope protein.